We begin with the raw amino-acid sequence, 234 residues long: 1-(5-phosphoribosyl)-5-[(5-phosphoribosylamino)methylideneamino] imidazole-4-carboxamide isomerase (234 aa).

Asp-9 serves as the catalytic Proton acceptor. Catalysis depends on Asp-131, which acts as the Proton donor.

It belongs to the HisA/HisF family.

It localises to the cytoplasm. The catalysed reaction is 1-(5-phospho-beta-D-ribosyl)-5-[(5-phospho-beta-D-ribosylamino)methylideneamino]imidazole-4-carboxamide = 5-[(5-phospho-1-deoxy-D-ribulos-1-ylimino)methylamino]-1-(5-phospho-beta-D-ribosyl)imidazole-4-carboxamide. The protein operates within amino-acid biosynthesis; L-histidine biosynthesis; L-histidine from 5-phospho-alpha-D-ribose 1-diphosphate: step 4/9. This chain is 1-(5-phosphoribosyl)-5-[(5-phosphoribosylamino)methylideneamino] imidazole-4-carboxamide isomerase, found in Staphylococcus carnosus (strain TM300).